The following is a 431-amino-acid chain: Enolase (431 aa).

Substrate-binding residues include His157 and Glu166. Glu209 functions as the Proton donor in the catalytic mechanism. Asp244, Glu293, and Asp318 together coordinate Mg(2+). Residues Glu293 and Asp318 each coordinate substrate. The Proton acceptor role is filled by Lys343. Substrate contacts are provided by residues 370–373 (SHRS) and Lys394.

The protein belongs to the enolase family. As to quaternary structure, homodimer. Mg(2+) is required as a cofactor.

It localises to the cytoplasm. The catalysed reaction is (2R)-2-phosphoglycerate = phosphoenolpyruvate + H2O. It functions in the pathway carbohydrate degradation; glycolysis; pyruvate from D-glyceraldehyde 3-phosphate: step 4/5. This chain is Enolase (ENO), found in Fasciola hepatica (Liver fluke).